A 989-amino-acid chain; its full sequence is Serine-repeat antigen protein 5 (989 aa).

The first 16 residues, 1 to 16 (MKSYISLFFILCVIFN), serve as a signal peptide directing secretion. Disordered stretches follow at residues 26–91 (SQTG…EKQD) and 165–245 (LPSN…RNLQ). 3 stretches are compositionally biased toward low complexity: residues 52–87 (QGST…STSS), 167–180 (SNGT…STGT), and 191–225 (SSSS…SSSS). S167 is modified (phosphoserine). N-linked (GlcNAc...) asparagine glycosylation occurs at N168. Residues 208-245 (SSSSSSSSSSSSSSSSSSESLPANGPDSPTVKPPRNLQ) are interaction with PTKL. N310 carries N-linked (GlcNAc...) asparagine glycosylation. The interaction with host VTN stretch occupies residues 365 to 382 (YKYLSEDIVSNFKEIKAE). C437 and C489 form a disulfide bridge. Phosphothreonine is present on T541. Disulfide bonds link C559–C564, C573–C602, C585–C628, C619–C664, and C747–C801. Residues 571 to 989 (NNCISNLQVE…TNNECYFCYV (419 aa)) are thiol-protease-like. Residues H754 and N779 contribute to the active site. Residue N820 is glycosylated (N-linked (GlcNAc...) asparagine). Residues 835–878 (KASPEFYHNLYFKNFNVGKKNLFSEKEDNENNKKLGNNYIIFGQ) constitute a propeptide, inhibition peptide. S858 bears the Phosphoserine mark.

The protein belongs to the peptidase C1 family. May interact (via C-terminus) with PTKL (via SAM domain). In terms of assembly, interacts (via C-terminus) with human VTN (via hemopexin repeat 2); may form heterotetramers of two VTN and SERA5 P47 heterodimers; the interaction may protect merozoites from phagocytosis by host monocytes; VTN glycosylation appears to be dispensable for the interaction. As to quaternary structure, monomer. Interacts with kinase CPK1/CDPK1 at the schizont stage. Post-translationally, phosphorylation by CPK1/CDPK1 increases SERA5 protease activity towards a synthetic peptide in vitro. Just prior to merozoite egress from host erythrocytes, proteolytically cleaved into multiple fragments. Cleaved by SUB1 into p47 and p73, p73 is further cleaved by SUB1 into p56 and p18 and p56 is further processed into p50 by an unidentified protease. p47 remains covalently associated with p18 via disulfide bond. p47 can be processed into p25n and p25c by SUB1. p25c and p25n remain associated with p18. Proteolytic processing is essential for merozoite egress from host erythrocytes. The cleavage of the propeptide to produce p50 is necessary for protease activity and to promote merozoite egress.

Its subcellular location is the parasitophorous vacuole. The protein resides in the secreted. The protein localises to the cell membrane. Its function is as follows. Plays an essential role during the asexual blood stage development by controlling the kinetics of merozoite egress from host erythrocytes. Specifically, prevents premature rupture of the parasitophorous vacuole and host erythrocyte membranes. In terms of biological role, may prevent merozoite phagocytosis by host monocytes via interaction with host VTN at the merozoite surface. Plays a role in parasite growth. Protease activity is controversial. The chain is Serine-repeat antigen protein 5 from Plasmodium falciparum (isolate CDC / Honduras).